We begin with the raw amino-acid sequence, 87 residues long: Mitochondrial import inner membrane translocase subunit TIM8 (87 aa).

The Twin CX3C motif motif lies at 44–68 (CFKKCISRVDNGNLSSQEEECLASC). 2 cysteine pairs are disulfide-bonded: Cys-44–Cys-68 and Cys-48–Cys-64.

The protein belongs to the small Tim family. Heterohexamer; composed of 3 copies of TIM8 and 3 copies of TIM13, named soluble 70 kDa complex. Associates with the TIM22 complex, whose core is composed of TIM22 and TIM54. Interacts with the transmembrane regions of multi-pass transmembrane proteins in transit.

Its subcellular location is the mitochondrion inner membrane. In terms of biological role, mitochondrial intermembrane chaperone that participates in the import and insertion of some multi-pass transmembrane proteins into the mitochondrial inner membrane. Also required for the transfer of beta-barrel precursors from the TOM complex to the sorting and assembly machinery (SAM complex) of the outer membrane. Acts as a chaperone-like protein that protects the hydrophobic precursors from aggregation and guide them through the mitochondrial intermembrane space. The TIM8-TIM13 complex is non essential and only mediates the import of few proteins, while the predominant TIM9-TIM10 70 kDa complex is crucial and mediates the import of much more proteins. This is Mitochondrial import inner membrane translocase subunit TIM8 (TIM8) from Candida glabrata (strain ATCC 2001 / BCRC 20586 / JCM 3761 / NBRC 0622 / NRRL Y-65 / CBS 138) (Yeast).